The sequence spans 189 residues: GTPase NRas (189 aa).

GTP is bound by residues 10-18 (GAGGVGKSA) and 29-30 (VD). The short motif at 32-40 (YDPTIEDSY) is the Effector region element. GTP is bound at residue 57–61 (DTAGQ). The residue at position 89 (Ser89) is a Phosphoserine. 116 to 119 (NKCD) is a binding site for GTP. Positions 166-185 (YRMKKLNSNDDGTQGCMGLP) are hypervariable region. Residue Lys170 forms a Glycyl lysine isopeptide (Lys-Gly) (interchain with G-Cter in ubiquitin) linkage. A lipid anchor (S-palmitoyl cysteine) is attached at Cys181. The S-farnesyl cysteine moiety is linked to residue Cys186. Positions 187 to 189 (VVM) are cleaved as a propeptide — removed in mature form.

It belongs to the small GTPase superfamily. Ras family. Interacts (active GTP-bound form preferentially) with RGS14. Interacts (active GTP-bound form) with RASSF7. Interacts (active GTP-bound form) with both SHOC2 and PP1c (all isoforms) to form a tertiary complex; SHOC2 and PP1c preferably bind M-Ras/MRAS, but they also bind K-Ras/KRAS, N-Ras/NRAS and H-Ras/HRAS. In terms of processing, palmitoylated by the ZDHHC9-GOLGA7 complex. Depalmitoylated by ABHD17A, ABHD17B and ABHD17C. A continuous cycle of de- and re-palmitoylation regulates rapid exchange between plasma membrane and Golgi. Acetylation at Lys-104 prevents interaction with guanine nucleotide exchange factors (GEFs). Post-translationally, ubiquitinated by the BCR(LZTR1) E3 ubiquitin ligase complex at Lys-170 in a non-degradative manner, leading to inhibit Ras signaling by decreasing Ras association with membranes. In terms of processing, phosphorylation at Ser-89 enhances NRAS association with its downstream effectors.

The protein localises to the cell membrane. It localises to the golgi apparatus membrane. The enzyme catalyses GTP + H2O = GDP + phosphate + H(+). Alternates between an inactive form bound to GDP and an active form bound to GTP. Activated by a guanine nucleotide-exchange factor (GEF) and inactivated by a GTPase-activating protein (GAP). In terms of biological role, ras proteins bind GDP/GTP and possess intrinsic GTPase activity. The protein is GTPase NRas (NRAS) of Cavia porcellus (Guinea pig).